The primary structure comprises 518 residues: Subtilisin-like serine protease Cla h 9.0101 (518 aa).

Residues 1–16 form the signal peptide; that stretch reads MRGALAGLSLATLATA. A propeptide spans 17-138 (removed in mature form); the sequence is SPVLVNSIHN…ERDQEVHVLG (122 aa). Residues 44–136 form the Inhibitor I9 domain; it reads YMIKFKDHVT…LVERDQEVHV (93 aa). In terms of domain architecture, Peptidase S8 spans 148–454; that stretch reads PWGLARISHR…GGESNYSAIV (307 aa). Residues aspartate 184 and histidine 216 each act as charge relay system in the active site. Positions 244–298 are igE-binding; it reads RSNGSGSMSDVVKGVEYAAESHLEQVSITKKGKRKGFKGSTANMSLGGGKSPILD. N-linked (GlcNAc...) asparagine glycans are attached at residues asparagine 246 and asparagine 286. Serine 382 (charge relay system) is an active-site residue. N-linked (GlcNAc...) asparagine glycosylation occurs at asparagine 449. Residues 460–518 constitute a propeptide, removed in mature form; the sequence is KATHRPTMLEEIESEAKVASKKVYSEGDELAHKVAELTEKVEDLIAGELKDMFRELKRE.

This sequence belongs to the peptidase S8 family.

Functionally, serine protease. The sequence is that of Subtilisin-like serine protease Cla h 9.0101 from Davidiella tassiana (Mycosphaerella tassiana).